A 72-amino-acid polypeptide reads, in one-letter code: Translation initiation factor IF-1 (72 aa).

An S1-like domain is found at 1–72; sequence MAKEDVIEMQ…SKGRIVFRAR (72 aa).

It belongs to the IF-1 family. As to quaternary structure, component of the 30S ribosomal translation pre-initiation complex which assembles on the 30S ribosome in the order IF-2 and IF-3, IF-1 and N-formylmethionyl-tRNA(fMet); mRNA recruitment can occur at any time during PIC assembly.

It is found in the cytoplasm. Its function is as follows. One of the essential components for the initiation of protein synthesis. Stabilizes the binding of IF-2 and IF-3 on the 30S subunit to which N-formylmethionyl-tRNA(fMet) subsequently binds. Helps modulate mRNA selection, yielding the 30S pre-initiation complex (PIC). Upon addition of the 50S ribosomal subunit IF-1, IF-2 and IF-3 are released leaving the mature 70S translation initiation complex. The polypeptide is Translation initiation factor IF-1 (Pseudoalteromonas translucida (strain TAC 125)).